Consider the following 331-residue polypeptide: Probable allantoicase (331 aa).

It belongs to the allantoicase family.

The catalysed reaction is allantoate + H2O = (S)-ureidoglycolate + urea. It functions in the pathway nitrogen metabolism; (S)-allantoin degradation; (S)-ureidoglycolate from allantoate (aminidohydrolase route): step 1/1. In Pseudomonas savastanoi pv. phaseolicola (strain 1448A / Race 6) (Pseudomonas syringae pv. phaseolicola (strain 1448A / Race 6)), this protein is Probable allantoicase.